We begin with the raw amino-acid sequence, 299 residues long: ATP phosphoribosyltransferase (299 aa).

The protein belongs to the ATP phosphoribosyltransferase family. Long subfamily. As to quaternary structure, equilibrium between an active dimeric form, an inactive hexameric form and higher aggregates. Interconversion between the various forms is largely reversible and is influenced by the natural substrates and inhibitors of the enzyme. Mg(2+) serves as cofactor.

The protein resides in the cytoplasm. It carries out the reaction 1-(5-phospho-beta-D-ribosyl)-ATP + diphosphate = 5-phospho-alpha-D-ribose 1-diphosphate + ATP. Its pathway is amino-acid biosynthesis; L-histidine biosynthesis; L-histidine from 5-phospho-alpha-D-ribose 1-diphosphate: step 1/9. With respect to regulation, feedback inhibited by histidine. Functionally, catalyzes the condensation of ATP and 5-phosphoribose 1-diphosphate to form N'-(5'-phosphoribosyl)-ATP (PR-ATP). Has a crucial role in the pathway because the rate of histidine biosynthesis seems to be controlled primarily by regulation of HisG enzymatic activity. This Enterobacter sp. (strain 638) protein is ATP phosphoribosyltransferase.